The chain runs to 219 residues: MMLSKVVMGLLTASLAAAHMEMSWPYPLRSRFDPQVPEEDIDYSMTSPLNSDGSNFPCKGYQTNTPWRATAQYTAGQTYNMTITGSATHGGGSCQLSLSYDNGKTFKVIQSMEGGCPLVSKYNFKIPGDVANGQALFAWTWYNLIGNRELYMNCADVVISGGTGTPSSFESAYPDLFVANVGNGCSTVEGRETVFANPGDQVIYGGTVTPSSPAFPICH.

A signal peptide spans 1-18 (MMLSKVVMGLLTASLAAA). Residue His-19 participates in Cu(+) binding. Cystine bridges form between Cys-58-Cys-154, Cys-94-Cys-116, and Cys-185-Cys-218. Asn-80 carries N-linked (GlcNAc...) asparagine glycosylation. Residue His-89 coordinates Cu(+).

This sequence belongs to the polysaccharide monooxygenase AA11 family. Requires Cu(2+) as cofactor.

Functionally, lytic polysaccharide monooxygenase (LPMO) that depolymerizes chitin via the oxidation of scissile beta-(1-4)-glycosidic bonds, yielding C1 or C4 oxidation products. Catalysis by LPMOs requires the reduction of the active-site copper from Cu(II) to Cu(I) by a reducing agent and H(2)O(2) or O(2) as a cosubstrate. Has considerable affinity for alpha-chitin and, more so, beta-chitin. Active toward both alpha-chitin and beta-chitin allomorphs and enhances chitin degradation by an endoacting chitinase, in particular for alpha-chitin, and so plays a role in fungal chitin turnover. The catalytic activity increases when supplying reactions with hydrogen peroxide, confirming that it has peroxygenase activity. Does not show activity on phosphoric acid-swollen cellulose (PASC), Avicel, tamarind xyloglucan, birchwood xylan, beechwood xylan, acetyl glucuronoxylan from aspen, ivory nut mannan, acetylated konjac glucomannan, potato starch, heparin, hyaluronic acid, and chitosan. The sequence is that of AA11 family lytic polysaccharide monooxygenase A from Aspergillus fumigatus (strain CBS 144.89 / FGSC A1163 / CEA10) (Neosartorya fumigata).